Reading from the N-terminus, the 284-residue chain is Bifunctional protein FolD (284 aa).

NADP(+) contacts are provided by residues 165–167 (GRS), Ser-190, and Ile-231.

This sequence belongs to the tetrahydrofolate dehydrogenase/cyclohydrolase family. In terms of assembly, homodimer.

It carries out the reaction (6R)-5,10-methylene-5,6,7,8-tetrahydrofolate + NADP(+) = (6R)-5,10-methenyltetrahydrofolate + NADPH. It catalyses the reaction (6R)-5,10-methenyltetrahydrofolate + H2O = (6R)-10-formyltetrahydrofolate + H(+). It participates in one-carbon metabolism; tetrahydrofolate interconversion. Catalyzes the oxidation of 5,10-methylenetetrahydrofolate to 5,10-methenyltetrahydrofolate and then the hydrolysis of 5,10-methenyltetrahydrofolate to 10-formyltetrahydrofolate. The polypeptide is Bifunctional protein FolD (Dechloromonas aromatica (strain RCB)).